A 132-amino-acid polypeptide reads, in one-letter code: Small ribosomal subunit protein uS8 (132 aa).

Belongs to the universal ribosomal protein uS8 family. Part of the 30S ribosomal subunit. Contacts proteins S5 and S12.

One of the primary rRNA binding proteins, it binds directly to 16S rRNA central domain where it helps coordinate assembly of the platform of the 30S subunit. The sequence is that of Small ribosomal subunit protein uS8 from Corynebacterium glutamicum (strain R).